Here is a 400-residue protein sequence, read N- to C-terminus: Formate-dependent phosphoribosylglycinamide formyltransferase (400 aa).

N(1)-(5-phospho-beta-D-ribosyl)glycinamide-binding positions include 22–23 and glutamate 82; that span reads EL. ATP is bound by residues arginine 115, lysine 156, 161–166, 196–199, and glutamate 204; these read SSGKGQ and EGFI. One can recognise an ATP-grasp domain in the interval 120-309; it reads RLAAETLCLP…EFALHARAIL (190 aa). Mg(2+)-binding residues include glutamate 268 and glutamate 280. N(1)-(5-phospho-beta-D-ribosyl)glycinamide-binding positions include aspartate 287, lysine 361, and 368–369; that span reads RR.

It belongs to the PurK/PurT family. In terms of assembly, homodimer.

It catalyses the reaction N(1)-(5-phospho-beta-D-ribosyl)glycinamide + formate + ATP = N(2)-formyl-N(1)-(5-phospho-beta-D-ribosyl)glycinamide + ADP + phosphate + H(+). It participates in purine metabolism; IMP biosynthesis via de novo pathway; N(2)-formyl-N(1)-(5-phospho-D-ribosyl)glycinamide from N(1)-(5-phospho-D-ribosyl)glycinamide (formate route): step 1/1. Functionally, involved in the de novo purine biosynthesis. Catalyzes the transfer of formate to 5-phospho-ribosyl-glycinamide (GAR), producing 5-phospho-ribosyl-N-formylglycinamide (FGAR). Formate is provided by PurU via hydrolysis of 10-formyl-tetrahydrofolate. The polypeptide is Formate-dependent phosphoribosylglycinamide formyltransferase (Xanthomonas euvesicatoria pv. vesicatoria (strain 85-10) (Xanthomonas campestris pv. vesicatoria)).